Here is a 342-residue protein sequence, read N- to C-terminus: Methylthioribose-1-phosphate isomerase (342 aa).

Substrate is bound by residues 44–46, Arg85, and Gln192; that span reads RGA. Residue Asp233 is the Proton donor of the active site. 243 to 244 lines the substrate pocket; that stretch reads NK.

Belongs to the eIF-2B alpha/beta/delta subunits family. MtnA subfamily.

The catalysed reaction is 5-(methylsulfanyl)-alpha-D-ribose 1-phosphate = 5-(methylsulfanyl)-D-ribulose 1-phosphate. Its pathway is amino-acid biosynthesis; L-methionine biosynthesis via salvage pathway; L-methionine from S-methyl-5-thio-alpha-D-ribose 1-phosphate: step 1/6. Its function is as follows. Catalyzes the interconversion of methylthioribose-1-phosphate (MTR-1-P) into methylthioribulose-1-phosphate (MTRu-1-P). This chain is Methylthioribose-1-phosphate isomerase, found in Caldicellulosiruptor saccharolyticus (strain ATCC 43494 / DSM 8903 / Tp8T 6331).